The following is a 293-amino-acid chain: Triosephosphate isomerase (293 aa).

Substrate is bound at residue 25 to 27; it reads NWK. Catalysis depends on H117, which acts as the Electrophile. E218 acts as the Proton acceptor in catalysis.

The protein belongs to the triosephosphate isomerase family. As to quaternary structure, homodimer.

Its subcellular location is the cytoplasm. The enzyme catalyses D-glyceraldehyde 3-phosphate = dihydroxyacetone phosphate. It functions in the pathway carbohydrate biosynthesis; gluconeogenesis. Its pathway is carbohydrate degradation; glycolysis; D-glyceraldehyde 3-phosphate from glycerone phosphate: step 1/1. Involved in the gluconeogenesis. Catalyzes stereospecifically the conversion of dihydroxyacetone phosphate (DHAP) to D-glyceraldehyde-3-phosphate (G3P). The chain is Triosephosphate isomerase from Tropheryma whipplei (strain Twist) (Whipple's bacillus).